The chain runs to 312 residues: Ribosomal RNA small subunit methyltransferase H (312 aa).

Residues 33–35, Asp51, Phe78, Asp97, and Gln104 each bind S-adenosyl-L-methionine; that span reads GGY.

Belongs to the methyltransferase superfamily. RsmH family.

The protein resides in the cytoplasm. It carries out the reaction cytidine(1402) in 16S rRNA + S-adenosyl-L-methionine = N(4)-methylcytidine(1402) in 16S rRNA + S-adenosyl-L-homocysteine + H(+). Its function is as follows. Specifically methylates the N4 position of cytidine in position 1402 (C1402) of 16S rRNA. This is Ribosomal RNA small subunit methyltransferase H from Orientia tsutsugamushi (strain Boryong) (Rickettsia tsutsugamushi).